A 642-amino-acid chain; its full sequence is MPVITLPDGSKREFAHPVSTLDVAADIGPGLAKACIAGRVNGELKDACDLIETDAELSIITAKDEEGIEILRHSCAHLLGHAIKQLWPQTKMAIGPVIDNGFYYDIDLEHKLTQDDIEALEKRMLELAKTNYDVVKRVVSWQEARDTFAARGEEYKIAILDENISKDATPALYHHEEYTDMCRGPHVPNMRFCQHFKLMSIAGAYWRGNSENKMLQRIYGTAWADKKALSTYLARLEEAAKRDHRKIGKQLDLYHMQEEAPGMVFWHNDGWSIFLELERFIRRKLNQYTYQEVKGPLMMDRVLWERSGHWDKYSEAMFTTSSENREYAIKPMNCPGHVQIFNQGLKSYRDLPLRMAEFGCCHRNEPSGSLHGLMRVRGFTQDDAHIFCTEDQVQAEVSSCIQMVYDTYSTFGFENIVVKLSTRPEKRIGDDAMWDRAEEALKQALRANNIEFTILPGEGAFYGPKIEFTLHDCLDRAWQCGTVQLDYALPSRLGATYVAEDNSRQTPVMIHRAILGSLERFLGILIEEYAGRFPTWLAPMQVVVMNITDKQADYVEEVVKFFKEQGIRASFDLRNEKIGFKIREHTLRRVPYLLVVGDQEMENKEVAVRTRDGVDLGKMRIEDFAAKIHQQISLRSLKLLEE.

A TGS domain is found at 1–61 (MPVITLPDGS…ETDAELSIIT (61 aa)). The tract at residues 243-534 (DHRKIGKQLD…LIEEYAGRFP (292 aa)) is catalytic. Cysteine 334, histidine 385, and histidine 511 together coordinate Zn(2+).

It belongs to the class-II aminoacyl-tRNA synthetase family. As to quaternary structure, homodimer. Zn(2+) serves as cofactor.

It is found in the cytoplasm. It carries out the reaction tRNA(Thr) + L-threonine + ATP = L-threonyl-tRNA(Thr) + AMP + diphosphate + H(+). Its function is as follows. Catalyzes the attachment of threonine to tRNA(Thr) in a two-step reaction: L-threonine is first activated by ATP to form Thr-AMP and then transferred to the acceptor end of tRNA(Thr). Also edits incorrectly charged L-seryl-tRNA(Thr). The protein is Threonine--tRNA ligase of Shewanella oneidensis (strain ATCC 700550 / JCM 31522 / CIP 106686 / LMG 19005 / NCIMB 14063 / MR-1).